The sequence spans 286 residues: Pantothenate synthetase (286 aa).

32–39 (MGALHEGH) is an ATP binding site. Residue histidine 39 is the Proton donor of the active site. Glutamine 63 contributes to the (R)-pantoate binding site. Glutamine 63 contacts beta-alanine. Position 149 to 152 (149 to 152 (GEKD)) interacts with ATP. Glutamine 155 provides a ligand contact to (R)-pantoate. Residues leucine 178 and 186–189 (SSSR) each bind ATP.

It belongs to the pantothenate synthetase family. As to quaternary structure, homodimer.

It is found in the cytoplasm. It catalyses the reaction (R)-pantoate + beta-alanine + ATP = (R)-pantothenate + AMP + diphosphate + H(+). It functions in the pathway cofactor biosynthesis; (R)-pantothenate biosynthesis; (R)-pantothenate from (R)-pantoate and beta-alanine: step 1/1. Its function is as follows. Catalyzes the condensation of pantoate with beta-alanine in an ATP-dependent reaction via a pantoyl-adenylate intermediate. The chain is Pantothenate synthetase from Bartonella quintana (strain Toulouse) (Rochalimaea quintana).